The sequence spans 369 residues: Histidinol-phosphate aminotransferase (369 aa).

An N6-(pyridoxal phosphate)lysine modification is found at Lys-223.

The protein belongs to the class-II pyridoxal-phosphate-dependent aminotransferase family. Histidinol-phosphate aminotransferase subfamily. In terms of assembly, homodimer. Pyridoxal 5'-phosphate is required as a cofactor.

The catalysed reaction is L-histidinol phosphate + 2-oxoglutarate = 3-(imidazol-4-yl)-2-oxopropyl phosphate + L-glutamate. It participates in amino-acid biosynthesis; L-histidine biosynthesis; L-histidine from 5-phospho-alpha-D-ribose 1-diphosphate: step 7/9. The polypeptide is Histidinol-phosphate aminotransferase (Shouchella clausii (strain KSM-K16) (Alkalihalobacillus clausii)).